Consider the following 487-residue polypeptide: F-box/LRR-repeat protein At1g48400 (487 aa).

The region spanning 9 to 57 is the F-box domain; it reads RDSISNLPDEILGKILSLLPTKVAASTSVLSKRWRNLLGLVDNLCFDES. LRR repeat units lie at residues 71–97, 125–153, 174–199, 225–251, 327–358, and 359–384; these read SLRF…SLSR, HLHA…TLSA, SILG…YMRD, THNP…DYSS, TLHL…SIES, and NKDK…VIKG.

In Arabidopsis thaliana (Mouse-ear cress), this protein is F-box/LRR-repeat protein At1g48400.